The primary structure comprises 480 residues: Adenosylmethionine-8-amino-7-oxononanoate aminotransferase (480 aa).

Residue 126-127 (GS) coordinates pyridoxal 5'-phosphate. Tyr-160 is a substrate binding site. Asp-270 lines the pyridoxal 5'-phosphate pocket. N6-(pyridoxal phosphate)lysine is present on Lys-314. Gly-350 lines the substrate pocket. 351-352 (PT) contacts pyridoxal 5'-phosphate. Residue Arg-441 participates in substrate binding.

This sequence belongs to the class-III pyridoxal-phosphate-dependent aminotransferase family. BioA subfamily. The cofactor is pyridoxal 5'-phosphate.

The enzyme catalyses (8S)-8-amino-7-oxononanoate + S-adenosyl-L-methionine = S-adenosyl-4-methylsulfanyl-2-oxobutanoate + (7R,8S)-7,8-diammoniononanoate. Its pathway is cofactor biosynthesis; biotin biosynthesis; 7,8-diaminononanoate from 8-amino-7-oxononanoate (SAM route): step 1/1. In terms of biological role, catalyzes the transfer of the alpha-amino group from S-adenosyl-L-methionine (SAM) to 7-keto-8-aminopelargonic acid (KAPA) to form 7,8-diaminopelargonic acid (DAPA). It is the only aminotransferase known to utilize SAM as an amino donor. The sequence is that of Adenosylmethionine-8-amino-7-oxononanoate aminotransferase from Saccharomyces cerevisiae (strain ATCC 204508 / S288c) (Baker's yeast).